We begin with the raw amino-acid sequence, 507 residues long: ATP synthase subunit alpha, chloroplastic (507 aa).

Residue 170–177 participates in ATP binding; that stretch reads GDRQTGKT.

It belongs to the ATPase alpha/beta chains family. In terms of assembly, F-type ATPases have 2 components, CF(1) - the catalytic core - and CF(0) - the membrane proton channel. CF(1) has five subunits: alpha(3), beta(3), gamma(1), delta(1), epsilon(1). CF(0) has four main subunits: a, b, b' and c.

It is found in the plastid. The protein resides in the chloroplast thylakoid membrane. The enzyme catalyses ATP + H2O + 4 H(+)(in) = ADP + phosphate + 5 H(+)(out). Its function is as follows. Produces ATP from ADP in the presence of a proton gradient across the membrane. The alpha chain is a regulatory subunit. This is ATP synthase subunit alpha, chloroplastic from Marchantia polymorpha (Common liverwort).